The chain runs to 519 residues: Maturase K (519 aa).

The protein belongs to the intron maturase 2 family. MatK subfamily.

It localises to the plastid. It is found in the chloroplast. Functionally, usually encoded in the trnK tRNA gene intron. Probably assists in splicing its own and other chloroplast group II introns. In Keteleeria davidiana (David's keteleeria), this protein is Maturase K.